Reading from the N-terminus, the 505-residue chain is 2,3-bisphosphoglycerate-independent phosphoglycerate mutase (505 aa).

Mn(2+) is bound by residues D12 and S62. S62 serves as the catalytic Phosphoserine intermediate. Substrate is bound by residues H123, 153–154 (RD), R185, R191, 257–260 (RPDR), and K330. Mn(2+) is bound by residues D397, H401, D438, H439, and H456.

This sequence belongs to the BPG-independent phosphoglycerate mutase family. In terms of assembly, monomer. The cofactor is Mn(2+).

The catalysed reaction is (2R)-2-phosphoglycerate = (2R)-3-phosphoglycerate. It participates in carbohydrate degradation; glycolysis; pyruvate from D-glyceraldehyde 3-phosphate: step 3/5. Its function is as follows. Catalyzes the interconversion of 2-phosphoglycerate and 3-phosphoglycerate. This is 2,3-bisphosphoglycerate-independent phosphoglycerate mutase from Staphylococcus saprophyticus subsp. saprophyticus (strain ATCC 15305 / DSM 20229 / NCIMB 8711 / NCTC 7292 / S-41).